Here is a 181-residue protein sequence, read N- to C-terminus: Cytolethal distending toxin subunit C (181 aa).

A signal peptide spans 1-15 (MKKLAIVFTMLLIAG). The N-palmitoyl cysteine moiety is linked to residue Cys-16. Cys-16 carries S-diacylglycerol cysteine lipidation. Residues 79 to 181 (QSGWIMIRTP…NPLNTESPII (103 aa)) enclose the Ricin B-type lectin domain.

As to quaternary structure, heterotrimer of 3 subunits, CdtA, CdtB and CdtC.

It localises to the cell outer membrane. Part of the tripartite complex that is required for the CDT activity. CdtC, along with CdtA, probably forms a heterodimeric subunit required for the delivery of CdtB. The chain is Cytolethal distending toxin subunit C (cdtC) from Escherichia coli.